The primary structure comprises 141 residues: ATP synthase epsilon chain (141 aa).

The protein belongs to the ATPase epsilon chain family. As to quaternary structure, F-type ATPases have 2 components, CF(1) - the catalytic core - and CF(0) - the membrane proton channel. CF(1) has five subunits: alpha(3), beta(3), gamma(1), delta(1), epsilon(1). CF(0) has three main subunits: a, b and c.

Its subcellular location is the cell inner membrane. Produces ATP from ADP in the presence of a proton gradient across the membrane. The protein is ATP synthase epsilon chain of Halorhodospira halophila (strain DSM 244 / SL1) (Ectothiorhodospira halophila (strain DSM 244 / SL1)).